The following is a 286-amino-acid chain: Pyridoxal kinase PdxY (286 aa).

Substrate-binding positions include Ser-9 and Thr-44–Gln-45. ATP-binding residues include Asp-111, Glu-148, and Lys-181. Asp-222 is a binding site for substrate.

Belongs to the pyridoxine kinase family. PdxY subfamily. As to quaternary structure, homodimer. Requires Mg(2+) as cofactor.

The catalysed reaction is pyridoxal + ATP = pyridoxal 5'-phosphate + ADP + H(+). The protein operates within cofactor metabolism; pyridoxal 5'-phosphate salvage; pyridoxal 5'-phosphate from pyridoxal: step 1/1. Functionally, pyridoxal kinase involved in the salvage pathway of pyridoxal 5'-phosphate (PLP). Catalyzes the phosphorylation of pyridoxal to PLP. This chain is Pyridoxal kinase PdxY, found in Histophilus somni (strain 129Pt) (Haemophilus somnus).